The following is an 82-amino-acid chain: Large ribosomal subunit protein bL27c (82 aa).

The tract at residues 1-22 is disordered; that stretch reads MAHKKGAGSTKNGRDSNSKRLG.

This sequence belongs to the bacterial ribosomal protein bL27 family.

It localises to the plastid. The protein resides in the chloroplast. The polypeptide is Large ribosomal subunit protein bL27c (rpl27) (Chrysotila carterae (Marine alga)).